A 365-amino-acid chain; its full sequence is Probable dual-specificity RNA methyltransferase RlmN (365 aa).

E99 (proton acceptor) is an active-site residue. A Radical SAM core domain is found at 105–344; it reads QSYGLSVCVT…CVVRQEHGTD (240 aa). Cysteines 112 and 349 form a disulfide. Positions 119, 123, and 126 each coordinate [4Fe-4S] cluster. S-adenosyl-L-methionine is bound by residues 171–172, S203, 227–229, and N305; these read GE and SLH. Catalysis depends on C349, which acts as the S-methylcysteine intermediate.

The protein belongs to the radical SAM superfamily. RlmN family. It depends on [4Fe-4S] cluster as a cofactor.

The protein localises to the cytoplasm. The enzyme catalyses adenosine(2503) in 23S rRNA + 2 reduced [2Fe-2S]-[ferredoxin] + 2 S-adenosyl-L-methionine = 2-methyladenosine(2503) in 23S rRNA + 5'-deoxyadenosine + L-methionine + 2 oxidized [2Fe-2S]-[ferredoxin] + S-adenosyl-L-homocysteine. It catalyses the reaction adenosine(37) in tRNA + 2 reduced [2Fe-2S]-[ferredoxin] + 2 S-adenosyl-L-methionine = 2-methyladenosine(37) in tRNA + 5'-deoxyadenosine + L-methionine + 2 oxidized [2Fe-2S]-[ferredoxin] + S-adenosyl-L-homocysteine. Its function is as follows. Specifically methylates position 2 of adenine 2503 in 23S rRNA and position 2 of adenine 37 in tRNAs. The protein is Probable dual-specificity RNA methyltransferase RlmN of Lactococcus lactis subsp. cremoris (strain MG1363).